Reading from the N-terminus, the 173-residue chain is Putative metal-dependent hydrolase BC_2708 (173 aa).

The Zn(2+) site is built by His65, His156, and His160.

It belongs to the metal hydrolase YfiT family. As to quaternary structure, homodimer. Zn(2+) is required as a cofactor.

It is found in the cytoplasm. Its function is as follows. Possible metal-dependent hydrolase. This is Putative metal-dependent hydrolase BC_2708 from Bacillus cereus (strain ATCC 14579 / DSM 31 / CCUG 7414 / JCM 2152 / NBRC 15305 / NCIMB 9373 / NCTC 2599 / NRRL B-3711).